Reading from the N-terminus, the 577-residue chain is Arginine--tRNA ligase (577 aa).

The 'HIGH' region signature appears at 122 to 132; sequence PNVAKEMHVGH.

It belongs to the class-I aminoacyl-tRNA synthetase family. In terms of assembly, monomer.

The protein resides in the cytoplasm. It catalyses the reaction tRNA(Arg) + L-arginine + ATP = L-arginyl-tRNA(Arg) + AMP + diphosphate. The polypeptide is Arginine--tRNA ligase (Escherichia coli O1:K1 / APEC).